Here is a 77-residue protein sequence, read N- to C-terminus: U8-lycotoxin-Ls1h (77 aa).

Residues M1–V20 form the signal peptide. Residues Q21–R26 constitute a propeptide that is removed on maturation.

The protein belongs to the neurotoxin 19 (CSTX) family. 08 (U8-Lctx) subfamily. Post-translationally, contains 4 disulfide bonds. As to expression, expressed by the venom gland.

The protein localises to the secreted. This is U8-lycotoxin-Ls1h from Lycosa singoriensis (Wolf spider).